The sequence spans 142 residues: Mini-ribonuclease 3 (142 aa).

Residue D33 is part of the active site.

Belongs to the MrnC RNase family. As to quaternary structure, homodimer. Mg(2+) serves as cofactor.

The protein localises to the cytoplasm. Functionally, involved in correct processing of both the 5' and 3' ends of 23S rRNA precursor. Processes 30S rRNA precursor transcript even in absence of ribonuclease 3 (Rnc); Rnc processes 30S rRNA into smaller rRNA precursors. The protein is Mini-ribonuclease 3 of Thermoanaerobacter sp. (strain X514).